Reading from the N-terminus, the 55-residue chain is Large ribosomal subunit protein bL32 (55 aa).

The disordered stretch occupies residues 1 to 28; that stretch reads MAVQQNKPTRSKRGMRRSHDALTTATLS.

The protein belongs to the bacterial ribosomal protein bL32 family.

This Serratia proteamaculans (strain 568) protein is Large ribosomal subunit protein bL32.